The primary structure comprises 326 residues: MASISSLNQIPCKTLQITSQYSKPTSKISTLPISSTNFLSKTEQHRSISVKEFTNPKPKFTAQATNYDKEDEWGPEVEQIRPGGVAVVEEEPPKEPSEIELLKKQLADSLYGTNRGLSASSETRAEIVELITQLESKNPNPAPTEALTLLNGKWILAYTSFSGLFPLLSRGNLPLVRVEEISQTIDSESFTVQNSVVFAGPLATTSISTNAKFEVRSPKRVQIKFEEGIIGTPQLTDSIVLPENVEFLGQKIDVSPFKGLITSVQDTASSVVKSISSQPPIKFPITNNNAQSWLLTTYLDDELRIPRGDAGSVFVLIKEGSPLLKP.

Residues 1–63 (MASISSLNQI…TNPKPKFTAQ (63 aa)) constitute a chloroplast transit peptide.

Belongs to the LIPC family. Associates with the major light-harvesting antenna complex polypeptides of the PSII oxygen-evolving complex. As to expression, expressed at high levels in leaves and in the petals and anthers of flowers.

The protein resides in the plastid. It is found in the chloroplast thylakoid membrane. In terms of biological role, required for normal plant growth. May be both photoprotective and play an ancillary role in photosynthesis. May structurally stabilize thylakoids during osmotic and oxidative stress. This Solanum demissum (Wild potato) protein is Light-induced protein, chloroplastic.